Here is a 231-residue protein sequence, read N- to C-terminus: uncharacterized protein (231 aa).

The next 7 membrane-spanning stretches (helical) occupy residues 26-46 (TYSW…LTAQ), 56-76 (SLRL…SMFA), 84-104 (AGAL…ALLF), 112-132 (ITAF…GFVI), 142-162 (FFLF…FVGS), 163-183 (SALS…LTAY), and 206-226 (INGA…LLNI).

This sequence belongs to the BI1 family.

It is found in the cell membrane. This is an uncharacterized protein from Deinococcus radiodurans (strain ATCC 13939 / DSM 20539 / JCM 16871 / CCUG 27074 / LMG 4051 / NBRC 15346 / NCIMB 9279 / VKM B-1422 / R1).